We begin with the raw amino-acid sequence, 426 residues long: Cytochrome c biogenesis protein Ccs1 (426 aa).

The next 3 helical transmembrane spans lie at 11-31, 70-90, and 153-173; these read LKFAIALLLLISITITFGSII, NFWFISLLLSLGISLIACTFF, and IAPVFVHLSIILILLGSIFAS.

This sequence belongs to the Ccs1/CcsB family. May interact with CcsA.

It is found in the plastid. Its subcellular location is the chloroplast thylakoid membrane. In terms of biological role, required during biogenesis of c-type cytochromes (cytochrome c6 and cytochrome f) at the step of heme attachment. The sequence is that of Cytochrome c biogenesis protein Ccs1 from Heterosigma akashiwo (strain CCMP452 / OLISTH).